Here is a 353-residue protein sequence, read N- to C-terminus: Lipase-specific foldase (353 aa).

Residues 1 to 19 (MAQADRPARGGLAARPMRG) are Cytoplasmic-facing. Residues 20 to 40 (ASFALAGLVACAACAAVVLWL) form a helical membrane-spanning segment. The Periplasmic segment spans residues 41–353 (RPAAPSPAPA…AASLDRGAGG (313 aa)).

The protein belongs to the lipase chaperone family. As to quaternary structure, monomer. Interacts with lipase (lip).

Its subcellular location is the cell inner membrane. Its function is as follows. Involved in the folding of the extracellular lipase (lip) during its passage through the periplasm. This chain is Lipase-specific foldase, found in Burkholderia plantarii.